The primary structure comprises 214 residues: Coiled-coil domain-containing protein 169 (214 aa).

Residues 29 to 154 (DAVQLSIFEL…NERRTYLAEM (126 aa)) adopt a coiled-coil conformation. Positions 155 to 170 (SQGSGLHQVSKRQQVD) are enriched in polar residues. The tract at residues 155–214 (SQGSGLHQVSKRQQVDQLPRMQENLVKTGRYNPAKQKTVSAKRGPVKKITRPNHLPELHP) is disordered.

It belongs to the CCDC169 family.

This is Coiled-coil domain-containing protein 169 (CCDC169) from Homo sapiens (Human).